We begin with the raw amino-acid sequence, 372 residues long: Mitogen-activated protein kinase kinase kinase 17 (372 aa).

The 257-residue stretch at 3–259 (WTRGRILGRG…ATQLLNHPFL (257 aa)) folds into the Protein kinase domain. Residues 9–17 (LGRGSTATV) and K32 each bind ATP. D126 functions as the Proton acceptor in the catalytic mechanism. Position 312 is a phosphoserine (S312).

Belongs to the protein kinase superfamily. Ser/Thr protein kinase family. As to quaternary structure, binds to MKK3.

It localises to the nucleus. It carries out the reaction L-seryl-[protein] + ATP = O-phospho-L-seryl-[protein] + ADP + H(+). It catalyses the reaction L-threonyl-[protein] + ATP = O-phospho-L-threonyl-[protein] + ADP + H(+). Component of the abscisic acid (ABA) signaling pathway that may act as ABA signal transducer in the context of abiotic stresses. Triggers MPK7 activation in a MKK3-dependent manner. Mediates the ABA-dependent activation of the MKK3-MPK7 module. This Arabidopsis thaliana (Mouse-ear cress) protein is Mitogen-activated protein kinase kinase kinase 17.